A 310-amino-acid polypeptide reads, in one-letter code: AT-hook motif nuclear-localized protein 15 (310 aa).

2 disordered regions span residues 15–112 (VESP…KESP) and 239–310 (EEEQ…PPSY). Polar residues-rich tracts occupy residues 31–41 (SNNNNPPTMTR) and 51–67 (TTNN…SQEE). Residues 88–100 (RRPRGRPPGSKNK) constitute a DNA-binding region (a.T hook). Over residues 94–104 (PPGSKNKPKSP) the composition is skewed to low complexity. A PPC domain is found at 112–251 (PNSLQSHVLE…QQQEQPLQLE (140 aa)). A compositionally biased stretch (pro residues) spans 301–310 (GPPPRAPPSY).

The protein resides in the nucleus. Its function is as follows. Transcription factor that specifically binds AT-rich DNA sequences related to the nuclear matrix attachment regions (MARs). Binds the DNA sequence GNFEI (GA-negative feedback element I) in the GA3OX1 promoter. Negatively regulates plant innate immunity (PTI) to pathogens through the down-regulation of the PAMP-triggered FRK1 expression. This Arabidopsis thaliana (Mouse-ear cress) protein is AT-hook motif nuclear-localized protein 15.